The primary structure comprises 240 residues: tRNA (guanine-N(7)-)-methyltransferase (240 aa).

Residues Met1 to Arg20 are disordered. Residues Glu70, Glu95, Asp122, and Asp145 each coordinate S-adenosyl-L-methionine. Residue Asp145 is part of the active site. Residues Lys149, Asp181, and Thr218–Glu221 contribute to the substrate site.

It belongs to the class I-like SAM-binding methyltransferase superfamily. TrmB family.

The catalysed reaction is guanosine(46) in tRNA + S-adenosyl-L-methionine = N(7)-methylguanosine(46) in tRNA + S-adenosyl-L-homocysteine. It functions in the pathway tRNA modification; N(7)-methylguanine-tRNA biosynthesis. Catalyzes the formation of N(7)-methylguanine at position 46 (m7G46) in tRNA. The polypeptide is tRNA (guanine-N(7)-)-methyltransferase (Pseudomonas putida (strain ATCC 700007 / DSM 6899 / JCM 31910 / BCRC 17059 / LMG 24140 / F1)).